The following is a 101-amino-acid chain: Apolipoprotein C-II (101 aa).

The N-terminal stretch at 1–22 (MGTRFLLALCLVLLVLGFEVQG) is a signal peptide. The tract at residues 66 to 74 (AVDEKLRDL) is lipid binding. The interval 78-101 (STAAMSTYTGIFTDQVLSVLKGEE) is lipoprotein lipase cofactor.

Belongs to the apolipoprotein C2 family. Post-translationally, proapolipoprotein C-II is synthesized as a sialic acid containing glycoprotein which is subsequently desialylated prior to its proteolytic processing. Proapolipoprotein C-II, the major form found in plasma undergoes proteolytic cleavage of its N-terminal hexapeptide to generate apolipoprotein C-II, which occurs as the minor form in plasma.

It localises to the secreted. Functionally, component of chylomicrons, very low-density lipoproteins (VLDL), low-density lipoproteins (LDL), and high-density lipoproteins (HDL) in plasma. Plays an important role in lipoprotein metabolism as an activator of lipoprotein lipase. Both proapolipoprotein C-II and apolipoprotein C-II can activate lipoprotein lipase. The sequence is that of Apolipoprotein C-II (APOC2) from Macaca fascicularis (Crab-eating macaque).